The sequence spans 101 residues: Class II hydrophobin 5 (101 aa).

The first 15 residues, 1–15 (MQLTALLALATLAIA), serve as a signal peptide directing secretion. Cystine bridges form between Cys33–Cys83, Cys44–Cys74, Cys45–Cys57, and Cys84–Cys95.

The protein belongs to the cerato-ulmin hydrophobin family. In terms of assembly, homodimer. Homodimers further self-assemble to form highly ordered films at water-air interfaces through intermolecular interactions.

It is found in the secreted. The protein localises to the cell wall. Functionally, aerial growth, conidiation, and dispersal of filamentous fungi in the environment rely upon a capability of their secreting small amphipathic proteins called hydrophobins (HPBs) with low sequence identity. Class I can self-assemble into an outermost layer of rodlet bundles on aerial cell surfaces, conferring cellular hydrophobicity that supports fungal growth, development and dispersal; whereas Class II form highly ordered films at water-air interfaces through intermolecular interactions but contribute nothing to the rodlet structure. The sequence is that of Class II hydrophobin 5 from Trichoderma asperellum (strain ATCC 204424 / CBS 433.97 / NBRC 101777).